The chain runs to 151 residues: Probable transcriptional regulator syrB2 (151 aa).

A disordered region spans residues 1 to 61 (MADESNTGSI…PRRYSEQQRK (61 aa)). Residues 11-23 (AAAVAPNADVKAP) show a composition bias toward low complexity. The span at 24 to 35 (AAKKKRSPRRQK) shows a compositional bias: basic residues.

It belongs to the SyrB family.

In terms of biological role, seems to affect the transcription of cya3. May be negatively autoregulated. The protein is Probable transcriptional regulator syrB2 (syrB2) of Rhizobium meliloti (strain 1021) (Ensifer meliloti).